A 492-amino-acid chain; its full sequence is 2,3-bisphosphoglycerate-independent phosphoglycerate mutase (492 aa).

Mn(2+) contacts are provided by Asp-11 and Ser-61. Ser-61 serves as the catalytic Phosphoserine intermediate. Residues His-118, 147-148 (RD), Arg-178, Arg-184, 248-251 (RNDR), and Lys-320 each bind substrate. Mn(2+) contacts are provided by Asp-386, His-390, Asp-427, His-428, and His-445.

This sequence belongs to the BPG-independent phosphoglycerate mutase family. In terms of assembly, monomer. The cofactor is Mn(2+).

It carries out the reaction (2R)-2-phosphoglycerate = (2R)-3-phosphoglycerate. The protein operates within carbohydrate degradation; glycolysis; pyruvate from D-glyceraldehyde 3-phosphate: step 3/5. Catalyzes the interconversion of 2-phosphoglycerate and 3-phosphoglycerate. The sequence is that of 2,3-bisphosphoglycerate-independent phosphoglycerate mutase from Campylobacter jejuni (strain RM1221).